Reading from the N-terminus, the 81-residue chain is Acyl carrier protein (81 aa).

Residues 1-79 (MDVAAMQVKI…DIFDYLAKNK (79 aa)) form the Carrier domain. An O-(pantetheine 4'-phosphoryl)serine modification is found at Ser-39.

Belongs to the acyl carrier protein (ACP) family. Post-translationally, 4'-phosphopantetheine is transferred from CoA to a specific serine of apo-ACP by AcpS. This modification is essential for activity because fatty acids are bound in thioester linkage to the sulfhydryl of the prosthetic group.

The protein resides in the cytoplasm. It participates in lipid metabolism; fatty acid biosynthesis. Functionally, carrier of the growing fatty acid chain in fatty acid biosynthesis. This chain is Acyl carrier protein, found in Syntrophobacter fumaroxidans (strain DSM 10017 / MPOB).